A 264-amino-acid chain; its full sequence is MDNRPIGFLDSGVGGLTVVRELMRQLPHEEIVYIGDSARAPYGPRPAEQIREYTWQLVNFLLTKDVKMIVIACNTATAVVWEEIKAQLDIPVLGVILPGASAAIKSSQGGKIGVIGTPMTVQSDIYRKKIHDLDPDLQVESLACPKFAPLVESGALSTSVTKKVVYETLRPLVGKVDSLILGCTHYPLLRPIIQNVMGPKVQLIDSGAECVRDISVLLNYFEINRGRDAGPLHHRFYTTASSQSFAQIGEEWLEKEIHVEHVEL.

Residues 10-11 and 42-43 contribute to the substrate site; these read DS and YG. C73 functions as the Proton donor/acceptor in the catalytic mechanism. 74–75 serves as a coordination point for substrate; that stretch reads NT. C183 (proton donor/acceptor) is an active-site residue. A substrate-binding site is contributed by 184–185; sequence TH.

It belongs to the aspartate/glutamate racemases family.

The catalysed reaction is L-glutamate = D-glutamate. It participates in cell wall biogenesis; peptidoglycan biosynthesis. Provides the (R)-glutamate required for cell wall biosynthesis. This is Glutamate racemase from Streptococcus pneumoniae serotype 19F (strain G54).